A 219-amino-acid chain; its full sequence is Ribose-5-phosphate isomerase A (219 aa).

Residues 28–31 (TGST), 81–84 (DGAD), and 94–97 (KGGG) each bind substrate. The Proton acceptor role is filled by glutamate 103. Lysine 121 is a substrate binding site.

Belongs to the ribose 5-phosphate isomerase family. As to quaternary structure, homodimer.

It carries out the reaction aldehydo-D-ribose 5-phosphate = D-ribulose 5-phosphate. It participates in carbohydrate degradation; pentose phosphate pathway; D-ribose 5-phosphate from D-ribulose 5-phosphate (non-oxidative stage): step 1/1. In terms of biological role, catalyzes the reversible conversion of ribose-5-phosphate to ribulose 5-phosphate. This Shigella boydii serotype 18 (strain CDC 3083-94 / BS512) protein is Ribose-5-phosphate isomerase A.